Consider the following 371-residue polypeptide: Chaperone protein DnaJ (371 aa).

The 65-residue stretch at 5–69 (EFYDRLGVSK…QKRAAYDQYG (65 aa)) folds into the J domain. The CR-type zinc-finger motif lies at 127-209 (GAEKEVSYNR…CHGTGHEKKT (83 aa)). Residues Cys140, Cys143, Cys157, Cys160, Cys183, Cys186, Cys197, and Cys200 each contribute to the Zn(2+) site. CXXCXGXG motif repeat units lie at residues 140 to 147 (CHTCSGSG), 157 to 164 (CQKCHGSG), 183 to 190 (CDVCQGSG), and 197 to 204 (CPTCHGTG).

This sequence belongs to the DnaJ family. As to quaternary structure, homodimer. Zn(2+) is required as a cofactor.

It is found in the cytoplasm. Functionally, participates actively in the response to hyperosmotic and heat shock by preventing the aggregation of stress-denatured proteins and by disaggregating proteins, also in an autonomous, DnaK-independent fashion. Unfolded proteins bind initially to DnaJ; upon interaction with the DnaJ-bound protein, DnaK hydrolyzes its bound ATP, resulting in the formation of a stable complex. GrpE releases ADP from DnaK; ATP binding to DnaK triggers the release of the substrate protein, thus completing the reaction cycle. Several rounds of ATP-dependent interactions between DnaJ, DnaK and GrpE are required for fully efficient folding. Also involved, together with DnaK and GrpE, in the DNA replication of plasmids through activation of initiation proteins. The protein is Chaperone protein DnaJ of Streptococcus agalactiae serotype Ia (strain ATCC 27591 / A909 / CDC SS700).